Consider the following 21-residue polypeptide: GIFGKILGAGKKVLCGLSGLC.

C15 and C21 form a disulfide bridge.

Expressed by the skin glands.

The protein resides in the secreted. Functionally, has antibacterial activity against E.coli ATCC 25992 (MIC=16 uM), E.coli CIB 84492 (MIC=16 uM), S.aureus ATCC 25923 (MIC=16 uM) and S.aureus CIB 85462 (MIC=8 uM). Has antifungal activity against C.albicans (MIC=63 uM). Has hemolytic activity against rabbit erythrocytes. The polypeptide is Nigrocin-2JDa (Odorrana jingdongensis (Jingdong frog)).